Here is a 1027-residue protein sequence, read N- to C-terminus: Xyloglucanase (1027 aa).

The first 32 residues, 1–32 (MKTFLGKKLWMASLAVALAAGSFAALPEMTSA), serve as a signal peptide directing secretion. Catalysis depends on Asp-70, which acts as the Nucleophile. 4 BNR repeats span residues 134–143 (RSTDRGDTWQ), 185–196 (WRSSDYGATWSK), 252–262 (YRSTDGGATWT), and 357–367 (FRSKDGGTTWT). Asp-479 (proton donor) is an active-site residue. BNR repeat units lie at residues 537 to 545 (SSDGGTNWY) and 717 to 727 (FRSDDGGASWV). The region spanning 876–1027 (PEGSIRIEMY…SGTLQWGIEP (152 aa)) is the CBM3 domain.

This sequence belongs to the glycosyl hydrolase 74 family.

Hydrolyzes the glucosidic bonds of unbranched Glc residues in tamarind seed xyloglucan, producing XXXG, XLXG, XXLG and XLLG. May have a dual endo- and exo- mode of action towards xyloglucan, or may have an endo-processive mode of action. In Paenibacillus sp, this protein is Xyloglucanase.